The sequence spans 286 residues: Formamidopyrimidine-DNA glycosylase (286 aa).

The active-site Schiff-base intermediate with DNA is the P2. The active-site Proton donor is E3. The active-site Proton donor; for beta-elimination activity is the K61. DNA-binding residues include H103, R122, and R164. The segment at 250-284 (NAYGQTGEPCGRCGTQIVRENFMNRGSHYCPNCQK) adopts an FPG-type zinc-finger fold. R274 acts as the Proton donor; for delta-elimination activity in catalysis.

It belongs to the FPG family. Monomer. Requires Zn(2+) as cofactor.

It catalyses the reaction Hydrolysis of DNA containing ring-opened 7-methylguanine residues, releasing 2,6-diamino-4-hydroxy-5-(N-methyl)formamidopyrimidine.. It carries out the reaction 2'-deoxyribonucleotide-(2'-deoxyribose 5'-phosphate)-2'-deoxyribonucleotide-DNA = a 3'-end 2'-deoxyribonucleotide-(2,3-dehydro-2,3-deoxyribose 5'-phosphate)-DNA + a 5'-end 5'-phospho-2'-deoxyribonucleoside-DNA + H(+). Involved in base excision repair of DNA damaged by oxidation or by mutagenic agents. Acts as a DNA glycosylase that recognizes and removes damaged bases. Has a preference for oxidized purines, such as 7,8-dihydro-8-oxoguanine (8-oxoG). Has AP (apurinic/apyrimidinic) lyase activity and introduces nicks in the DNA strand. Cleaves the DNA backbone by beta-delta elimination to generate a single-strand break at the site of the removed base with both 3'- and 5'-phosphates. In Corynebacterium glutamicum (strain R), this protein is Formamidopyrimidine-DNA glycosylase.